Here is a 443-residue protein sequence, read N- to C-terminus: UDP-N-acetylmuramate--L-alanine ligase (443 aa).

Residue 111 to 117 (GAHGKTS) participates in ATP binding.

The protein belongs to the MurCDEF family.

Its subcellular location is the cytoplasm. It carries out the reaction UDP-N-acetyl-alpha-D-muramate + L-alanine + ATP = UDP-N-acetyl-alpha-D-muramoyl-L-alanine + ADP + phosphate + H(+). The protein operates within cell wall biogenesis; peptidoglycan biosynthesis. In terms of biological role, cell wall formation. This is UDP-N-acetylmuramate--L-alanine ligase from Ligilactobacillus salivarius (strain UCC118) (Lactobacillus salivarius).